The sequence spans 525 residues: Protein nucleotidyltransferase YdiU (525 aa).

ATP is bound by residues glycine 107, glycine 109, arginine 110, lysine 129, aspartate 141, glycine 142, arginine 192, and arginine 199. Catalysis depends on aspartate 268, which acts as the Proton acceptor. The Mg(2+) site is built by asparagine 269 and aspartate 278. Aspartate 278 contributes to the ATP binding site.

Belongs to the SELO family. Requires Mg(2+) as cofactor. The cofactor is Mn(2+).

It carries out the reaction L-seryl-[protein] + ATP = 3-O-(5'-adenylyl)-L-seryl-[protein] + diphosphate. The enzyme catalyses L-threonyl-[protein] + ATP = 3-O-(5'-adenylyl)-L-threonyl-[protein] + diphosphate. It catalyses the reaction L-tyrosyl-[protein] + ATP = O-(5'-adenylyl)-L-tyrosyl-[protein] + diphosphate. The catalysed reaction is L-histidyl-[protein] + UTP = N(tele)-(5'-uridylyl)-L-histidyl-[protein] + diphosphate. It carries out the reaction L-seryl-[protein] + UTP = O-(5'-uridylyl)-L-seryl-[protein] + diphosphate. The enzyme catalyses L-tyrosyl-[protein] + UTP = O-(5'-uridylyl)-L-tyrosyl-[protein] + diphosphate. Functionally, nucleotidyltransferase involved in the post-translational modification of proteins. It can catalyze the addition of adenosine monophosphate (AMP) or uridine monophosphate (UMP) to a protein, resulting in modifications known as AMPylation and UMPylation. The polypeptide is Protein nucleotidyltransferase YdiU (Ralstonia nicotianae (strain ATCC BAA-1114 / GMI1000) (Ralstonia solanacearum)).